The sequence spans 166 residues: Putative peptidyl-prolyl cis-trans isomerase dodo (166 aa).

Positions 5–39 (EQLPDGWEKRTSRSTGMSYYLNMYTKESQWDQPTE) constitute a WW domain. Positions 32-53 (SQWDQPTEPAKKAGGGSAGGGD) are disordered. The span at 44 to 53 (AGGGSAGGGD) shows a compositional bias: gly residues. Residues 55–166 (PDEVHCLHLL…SGLHIILRKA (112 aa)) enclose the PpiC domain.

The enzyme catalyses [protein]-peptidylproline (omega=180) = [protein]-peptidylproline (omega=0). The polypeptide is Putative peptidyl-prolyl cis-trans isomerase dodo (dod) (Drosophila melanogaster (Fruit fly)).